Consider the following 214-residue polypeptide: Adenylate kinase (214 aa).

10–15 (GAGKGT) contacts ATP. The segment at 30–59 (STGDMLRAAVKAGTPLGLEAKKVMDAGQLV) is NMP. AMP contacts are provided by residues T31, R36, 57 to 59 (QLV), 85 to 88 (GFPR), and Q92. The tract at residues 122 to 159 (GRRVHPGSGRVYHVVFNPPKVEGKDDVTGEDLVIRPDD) is LID. ATP-binding positions include R123 and 132 to 133 (VY). AMP is bound by residues R156 and R167. Q200 is a binding site for ATP.

This sequence belongs to the adenylate kinase family. As to quaternary structure, monomer.

It is found in the cytoplasm. The catalysed reaction is AMP + ATP = 2 ADP. It functions in the pathway purine metabolism; AMP biosynthesis via salvage pathway; AMP from ADP: step 1/1. In terms of biological role, catalyzes the reversible transfer of the terminal phosphate group between ATP and AMP. Plays an important role in cellular energy homeostasis and in adenine nucleotide metabolism. This chain is Adenylate kinase, found in Shewanella amazonensis (strain ATCC BAA-1098 / SB2B).